The following is a 341-amino-acid chain: ATPase GET3 (341 aa).

34 to 41 (KGGVGKTT) serves as a coordination point for ATP. The active site involves Asp63. ATP-binding residues include Glu245 and Asn272. Residues Cys283 and Cys286 each coordinate Zn(2+).

It belongs to the arsA ATPase family. In terms of assembly, homodimer.

It is found in the cytoplasm. The protein localises to the endoplasmic reticulum. Functionally, ATPase required for the post-translational delivery of tail-anchored (TA) proteins to the endoplasmic reticulum. Recognizes and selectively binds the transmembrane domain of TA proteins in the cytosol. This complex then targets to the endoplasmic reticulum by membrane-bound receptors, where the tail-anchored protein is released for insertion. This process is regulated by ATP binding and hydrolysis. ATP binding drives the homodimer towards the closed dimer state, facilitating recognition of newly synthesized TA membrane proteins. ATP hydrolysis is required for insertion. Subsequently, the homodimer reverts towards the open dimer state, lowering its affinity for the membrane-bound receptor, and returning it to the cytosol to initiate a new round of targeting. This is ATPase GET3 from Ajellomyces dermatitidis (strain ER-3 / ATCC MYA-2586) (Blastomyces dermatitidis).